A 740-amino-acid polypeptide reads, in one-letter code: Ion-translocating oxidoreductase complex subunit C (740 aa).

2 4Fe-4S ferredoxin-type domains span residues 369–397 and 407–436; these read GEPQ…QQLY and KATT…VQYF. [4Fe-4S] cluster is bound by residues Cys377, Cys380, Cys383, Cys387, Cys416, Cys419, Cys422, and Cys426. Positions 602 to 716 are disordered; sequence KLEQQQANAE…EPEEQVDPRK (115 aa).

Belongs to the 4Fe4S bacterial-type ferredoxin family. RnfC subfamily. The complex is composed of six subunits: RsxA, RsxB, RsxC, RsxD, RsxE and RsxG. It depends on [4Fe-4S] cluster as a cofactor.

It localises to the cell inner membrane. Its function is as follows. Part of a membrane-bound complex that couples electron transfer with translocation of ions across the membrane. Required to maintain the reduced state of SoxR. In Escherichia coli O139:H28 (strain E24377A / ETEC), this protein is Ion-translocating oxidoreductase complex subunit C.